Reading from the N-terminus, the 87-residue chain is U14-lycotoxin-Ls1a (87 aa).

Positions 1-20 (MNSKVFAALLLLALSTCVLS) are cleaved as a signal peptide. In terms of domain architecture, WAP spans 21-66 (EKYCPTPRNTSCKKMNIRNNCCRDSDCTSNAFCCAEPCGNFCHKAS). 5 disulfides stabilise this stretch: Cys-24/Cys-54, Cys-32/Cys-58, Cys-41/Cys-53, Cys-42/Cys-80, and Cys-47/Cys-62.

This sequence belongs to the venom protein 11 family. 01 (wap-1) subfamily. Contains 5 disulfide bonds. As to expression, expressed by the venom gland.

It is found in the secreted. In terms of biological role, has antibacterial activity. This Lycosa singoriensis (Wolf spider) protein is U14-lycotoxin-Ls1a.